The following is a 764-amino-acid chain: Calpain-like protease palB/RIM13 (764 aa).

Positions 95-368 constitute a Calpain catalytic domain; that stretch reads GEFYPPLTVY…FKYFYINWNP (274 aa). Active-site residues include Cys165, His318, and Asn336.

Belongs to the peptidase C2 family. PalB/RIM13 subfamily.

In terms of biological role, required for the proteolytic cleavage of the transcription factor RIM101 in response to alkaline ambient pH. This is Calpain-like protease palB/RIM13 from Debaryomyces hansenii (strain ATCC 36239 / CBS 767 / BCRC 21394 / JCM 1990 / NBRC 0083 / IGC 2968) (Yeast).